Reading from the N-terminus, the 235-residue chain is MKLNISYPINGTQKCVEIDDEHRVRVFYDKRIGQEVDGEAVGDEFKGYVFKIAGGNDKQGFPMKQGVLLPTRVKLLMAKGTSCYRPRRNGERKRKSVRGAIVGPDLAVLALVIVKKGDQEIEGVTNETVPKRLGPKRANNIRKFFGLTKEDDVRDYVIRREVTKGEKTYTKAPKIQRLVTPQRLQRKRQQKALKIKNAQAQREAAAEYAQLLAKRLAERKAEVRKRRASSLKAAE.

Serine 229 and serine 230 each carry phosphoserine.

Belongs to the eukaryotic ribosomal protein eS6 family. In terms of processing, phosphorylated.

This Kluyveromyces marxianus (Yeast) protein is Small ribosomal subunit protein eS6 (RPS6).